A 208-amino-acid chain; its full sequence is Large ribosomal subunit protein uL3 (208 aa).

Gln-150 is subject to N5-methylglutamine.

It belongs to the universal ribosomal protein uL3 family. As to quaternary structure, part of the 50S ribosomal subunit. Forms a cluster with proteins L14 and L19. Post-translationally, methylated by PrmB.

In terms of biological role, one of the primary rRNA binding proteins, it binds directly near the 3'-end of the 23S rRNA, where it nucleates assembly of the 50S subunit. This chain is Large ribosomal subunit protein uL3, found in Buchnera aphidicola subsp. Cinara cedri (strain Cc).